The following is a 347-amino-acid chain: Holliday junction branch migration complex subunit RuvB (347 aa).

The segment at 1–185 is large ATPase domain (RuvB-L); the sequence is MSDDPTTPEL…FGFTAHLEFY (185 aa). Residues leucine 24, arginine 25, glycine 66, lysine 69, threonine 70, threonine 71, 132–134, arginine 175, tyrosine 185, and arginine 222 each bind ATP; that span reads EDF. Threonine 70 is a Mg(2+) binding site. A small ATPAse domain (RuvB-S) region spans residues 186–255; sequence DEGELAQVLA…AVHAALELYD (70 aa). A head domain (RuvB-H) region spans residues 258-347; the sequence is ELGLDRLDRA…SQPPSLMDDL (90 aa). DNA is bound by residues arginine 313 and arginine 318.

The protein belongs to the RuvB family. In terms of assembly, homohexamer. Forms an RuvA(8)-RuvB(12)-Holliday junction (HJ) complex. HJ DNA is sandwiched between 2 RuvA tetramers; dsDNA enters through RuvA and exits via RuvB. An RuvB hexamer assembles on each DNA strand where it exits the tetramer. Each RuvB hexamer is contacted by two RuvA subunits (via domain III) on 2 adjacent RuvB subunits; this complex drives branch migration. In the full resolvosome a probable DNA-RuvA(4)-RuvB(12)-RuvC(2) complex forms which resolves the HJ.

The protein localises to the cytoplasm. The catalysed reaction is ATP + H2O = ADP + phosphate + H(+). The RuvA-RuvB-RuvC complex processes Holliday junction (HJ) DNA during genetic recombination and DNA repair, while the RuvA-RuvB complex plays an important role in the rescue of blocked DNA replication forks via replication fork reversal (RFR). RuvA specifically binds to HJ cruciform DNA, conferring on it an open structure. The RuvB hexamer acts as an ATP-dependent pump, pulling dsDNA into and through the RuvAB complex. RuvB forms 2 homohexamers on either side of HJ DNA bound by 1 or 2 RuvA tetramers; 4 subunits per hexamer contact DNA at a time. Coordinated motions by a converter formed by DNA-disengaged RuvB subunits stimulates ATP hydrolysis and nucleotide exchange. Immobilization of the converter enables RuvB to convert the ATP-contained energy into a lever motion, pulling 2 nucleotides of DNA out of the RuvA tetramer per ATP hydrolyzed, thus driving DNA branch migration. The RuvB motors rotate together with the DNA substrate, which together with the progressing nucleotide cycle form the mechanistic basis for DNA recombination by continuous HJ branch migration. Branch migration allows RuvC to scan DNA until it finds its consensus sequence, where it cleaves and resolves cruciform DNA. This Leifsonia xyli subsp. xyli (strain CTCB07) protein is Holliday junction branch migration complex subunit RuvB.